A 111-amino-acid chain; its full sequence is Cyclin-dependent protein kinase inhibitor SMR2 (111 aa).

Residues 1-66 (MSKLLETLEE…PPPRKRPREI (66 aa)) are disordered. Positions 10–35 (EEKTVEQKPRSQEEEDHQDSSKKEEL) are enriched in basic and acidic residues.

Interacts with CYCD2-1. Interacts with CDKB1-1. Expressed at low levels in roots and stems. Expressed in the root vascular tissue.

It is found in the nucleus. Functionally, cyclin-dependent protein kinase (CDK) inhibitor that restricts cell proliferation and cooperates with SIM and SMR1 to promote endoreplication during leaf development. This chain is Cyclin-dependent protein kinase inhibitor SMR2, found in Arabidopsis thaliana (Mouse-ear cress).